The sequence spans 286 residues: 4-hydroxybenzoate octaprenyltransferase (286 aa).

The next 9 helical transmembrane spans lie at isoleucine 22–valine 42, phenylalanine 45–isoleucine 65, leucine 90–valine 110, leucine 113–phenylalanine 133, glutamine 142–glycine 162, tryptophan 169–valine 189, leucine 212–glutamate 232, valine 236–isoleucine 256, and phenylalanine 265–alanine 285.

The protein belongs to the UbiA prenyltransferase family. Mg(2+) is required as a cofactor.

The protein resides in the cell inner membrane. It carries out the reaction all-trans-octaprenyl diphosphate + 4-hydroxybenzoate = 4-hydroxy-3-(all-trans-octaprenyl)benzoate + diphosphate. Its pathway is cofactor biosynthesis; ubiquinone biosynthesis. In terms of biological role, catalyzes the prenylation of para-hydroxybenzoate (PHB) with an all-trans polyprenyl group. Mediates the second step in the final reaction sequence of ubiquinone-8 (UQ-8) biosynthesis, which is the condensation of the polyisoprenoid side chain with PHB, generating the first membrane-bound Q intermediate 3-octaprenyl-4-hydroxybenzoate. The polypeptide is 4-hydroxybenzoate octaprenyltransferase (Tolumonas auensis (strain DSM 9187 / NBRC 110442 / TA 4)).